The primary structure comprises 207 residues: Glycerol-3-phosphate acyltransferase (207 aa).

Transmembrane regions (helical) follow at residues 7-27 (YALAAVAGYLSGSIPFGLVIV), 58-78 (LATFLLDSLKAGLVALAFTLL), 83-103 (VGFVAGFAAFIGHCYPVWLGF), 116-136 (LAFVSPLHGLVVAAPVWLGLF), 141-161 (ISSLAALTAAVAVPPGAWLMG), and 166-186 (LILAGLALLSVFVFWTHRENI).

It belongs to the PlsY family. As to quaternary structure, probably interacts with PlsX.

It is found in the cell inner membrane. The catalysed reaction is an acyl phosphate + sn-glycerol 3-phosphate = a 1-acyl-sn-glycero-3-phosphate + phosphate. Its pathway is lipid metabolism; phospholipid metabolism. Functionally, catalyzes the transfer of an acyl group from acyl-phosphate (acyl-PO(4)) to glycerol-3-phosphate (G3P) to form lysophosphatidic acid (LPA). This enzyme utilizes acyl-phosphate as fatty acyl donor, but not acyl-CoA or acyl-ACP. This chain is Glycerol-3-phosphate acyltransferase, found in Hyphomonas neptunium (strain ATCC 15444).